The following is a 178-amino-acid chain: UPF0098 protein PYRAB11530 (178 aa).

A signal peptide spans 1–22 (MRYLVPLLVFMVLGMGCLGGGG).

It belongs to the UPF0098 family.

The sequence is that of UPF0098 protein PYRAB11530 from Pyrococcus abyssi (strain GE5 / Orsay).